A 1368-amino-acid polypeptide reads, in one-letter code: Alpha-latrotoxin-Lg1a (1368 aa).

The interval 217 to 236 is helix H8 is the probable transmembrane region of the tetrameric pore inserted in the target cell membrane; that stretch reads VLYAILYGTQTYVSVMFFLL. Cysteine 392 and cysteine 1044 form a disulfide bridge. 20 ANK repeats span residues 469 to 500, 504 to 533, 538 to 568, 572 to 601, 605 to 635, 639 to 669, 674 to 704, 708 to 737, 741 to 770, 774 to 803, 807 to 837, 841 to 870, 874 to 903, 907 to 936, 953 to 981, 982 to 1011, 1013 to 1042, 1046 to 1075, 1079 to 1109, and 1115 to 1144; these read QGRTVFHAAAKSGNDKIMIELTFFSKYTDINQ, KGYTPIHVAADSGNAGIVNLLIRSGISVNS, FLQTPLHLAAQRGFVATFQRLMESPEININE, DGFTPLHYAVRGGERILEAFINQAGIDVNV, KGLTPFHLAVIKNDWPVASTLLRSKKIDINA, NNMTALHYAAILGFLETTKQLINLKEINANA, GLLSALHYAILYKHDDVALFLLKSSKVNYNL, GDITPLHLAVMQGRKQVLSEMFNIGININQ, EKYTPLHLAAMSKYPELVEILLDQGSNLEA, TGATPLNLATFKGKSQAALILLKDEVNWRE, NGQMPIHGAAMNGLLDVAQAILYLDATVLDI, NLDTPLNLAAQNSHIDMVKYFIDLGAKVNT, KGQAPLLAFSKKGNLDMVKYLFDKNANVYI, DGLNFFYYAVRNGHLNIVKYAMSEKDKFEW, ISHFAVCDAVQYDKIEIVKYFVGTLGHYS, ICSPLHQAARYGHIHIVKYLVEEEVLSVDG, KPDTPLCYASENGHLAVVQYLIRNGAKVNH, NGMTAIDKAITKNQLQVVQILAENGVDFRR, LDATPFLTAVASNSYEIAEYLIREKRQNINI, and NKETALHLAVYYKNLQMIKLLVKYGIDENI. The interval 1174–1177 is furin-like endopeptidase recognition region; that stretch reads KFRR. Positions 1178–1368 are excised as a propeptide; it reads EYKSSNGEHD…GETLHLFHES (191 aa).

It belongs to the cationic peptide 01 (latrotoxin) family. 03 (alpha-latrotoxin) subfamily. In terms of assembly, homotetramer in membranes. As to expression, expressed in venom gland, cephalothorax, and abdomen tissues from both males and females.

It localises to the secreted. The protein resides in the target cell membrane. Its function is as follows. Presynaptic neurotoxin that causes massive release of neurotransmitters from vertebrate (but not invertebrate) nerve terminals and endocrine cells via a complex mechanism involving activation of receptor(s) and toxin insertion into the plasma membrane with subsequent pore formation. Binds to neurexin-1-alpha (NRXN1) in a calcium dependent manner, adhesion G protein-coupled receptor L1 (ADGRL1, also termed latrophilin-1 and calcium-independent receptor of latrotoxin (CIRL)), and receptor-type tyrosine-protein phosphatase S (PTPRS), also termed PTP sigma. NRXN1 and PTPRS are suggested to provide a platform for binding and subsequent pore formation events. In contrast, binding to ADGRL1 does not involve oligomerization and channel formation, but direct downstream stimulation of the synaptic fusion machinery. The protein is Alpha-latrotoxin-Lg1a of Latrodectus geometricus (Brown widow spider).